The chain runs to 578 residues: Asparagine synthetase [glutamine-hydrolyzing] 2 (578 aa).

The active-site For GATase activity is C2. The region spanning 2–185 (CGILAVLGCI…PGHIYSSKQG (184 aa)) is the Glutamine amidotransferase type-2 domain. L-glutamine is bound by residues 50 to 54 (RLAII), 75 to 77 (NGE), and D98. The 241-residue stretch at 210–450 (LRNAFEKAVI…LPKHILYRQK (241 aa)) folds into the Asparagine synthetase domain. ATP is bound by residues L231, I267, and 341 to 342 (SG).

As to expression, expressed in the vascular region adjacent to leaf mesophyll cells in the companion cell-sieve tube element complex.

It carries out the reaction L-aspartate + L-glutamine + ATP + H2O = L-asparagine + L-glutamate + AMP + diphosphate + H(+). The protein operates within amino-acid biosynthesis; L-asparagine biosynthesis. Functionally, essential for nitrogen assimilation, distribution and remobilization within the plant via the phloem. The protein is Asparagine synthetase [glutamine-hydrolyzing] 2 (ASN2) of Arabidopsis thaliana (Mouse-ear cress).